The sequence spans 644 residues: Arabinosyltransferase XEG113 (644 aa).

The Cytoplasmic portion of the chain corresponds to 1–17 (MVEGWRNGFRDATNSKP). The chain crosses the membrane as a helical; Signal-anchor for type II membrane protein span at residues 18-38 (LFVTIYATVIIGVLVSSFYVF). The Lumenal portion of the chain corresponds to 39–644 (SAIYSPTNGS…QTPEEDHPPL (606 aa)). 2 N-linked (GlcNAc...) asparagine glycosylation sites follow: Asn-46 and Asn-70. A DXD motif motif is present at residues 226–228 (DTD). Asn-446 and Asn-542 each carry an N-linked (GlcNAc...) asparagine glycan.

The protein belongs to the glycosyltransferase 77 family.

Its subcellular location is the golgi apparatus membrane. Plays a role in the arabinosylation of cell wall components. Involved in the arabinosylation of extensin proteins in root hair cells. Extensins are structural glycoproteins present in cell walls and its arabinosylation is important for cell elongation, root hair cell development, lateral root development and root hair tip growth. This chain is Arabinosyltransferase XEG113, found in Arabidopsis thaliana (Mouse-ear cress).